The chain runs to 201 residues: FMN-dependent NADH:quinone oxidoreductase (201 aa).

Residues Ser-10, 16–18 (SQS), 96–99 (MYNF), and 140–143 (SRGG) each bind FMN.

This sequence belongs to the azoreductase type 1 family. In terms of assembly, homodimer. It depends on FMN as a cofactor.

It carries out the reaction 2 a quinone + NADH + H(+) = 2 a 1,4-benzosemiquinone + NAD(+). The enzyme catalyses N,N-dimethyl-1,4-phenylenediamine + anthranilate + 2 NAD(+) = 2-(4-dimethylaminophenyl)diazenylbenzoate + 2 NADH + 2 H(+). Quinone reductase that provides resistance to thiol-specific stress caused by electrophilic quinones. Its function is as follows. Also exhibits azoreductase activity. Catalyzes the reductive cleavage of the azo bond in aromatic azo compounds to the corresponding amines. This Yersinia pseudotuberculosis serotype O:1b (strain IP 31758) protein is FMN-dependent NADH:quinone oxidoreductase.